Consider the following 324-residue polypeptide: Elongation factor P--(R)-beta-lysine ligase (324 aa).

75–77 (SPE) lines the substrate pocket. Residues 99–101 (RNK) and N108 each bind ATP. Y117 is a binding site for substrate. 243-244 (EL) provides a ligand contact to ATP. Residue E250 participates in substrate binding. Residue G299 coordinates ATP.

The protein belongs to the class-II aminoacyl-tRNA synthetase family. EpmA subfamily. Homodimer.

The catalysed reaction is D-beta-lysine + L-lysyl-[protein] + ATP = N(6)-((3R)-3,6-diaminohexanoyl)-L-lysyl-[protein] + AMP + diphosphate + H(+). In terms of biological role, with EpmB is involved in the beta-lysylation step of the post-translational modification of translation elongation factor P (EF-P). Catalyzes the ATP-dependent activation of (R)-beta-lysine produced by EpmB, forming a lysyl-adenylate, from which the beta-lysyl moiety is then transferred to the epsilon-amino group of a conserved specific lysine residue in EF-P. The protein is Elongation factor P--(R)-beta-lysine ligase of Buchnera aphidicola subsp. Acyrthosiphon pisum (strain 5A).